Reading from the N-terminus, the 146-residue chain is Hemoglobin subunit beta (146 aa).

The Globin domain maps to 2 to 146; the sequence is HWSAEEKQLI…VAHALARKYH (145 aa). 2 residues coordinate heme b: histidine 63 and histidine 92.

Belongs to the globin family. In terms of assembly, heterotetramer of two alpha chains and two beta chains. Red blood cells.

Functionally, involved in oxygen transport from the lung to the various peripheral tissues. The chain is Hemoglobin subunit beta (HBB) from Eudyptes chrysocome (Western rockhopper penguin).